We begin with the raw amino-acid sequence, 256 residues long: MKKVALVTGAGQGIGKAIALRLVKDGFAVAIADYNDATAKAVASEINQAGGRAMAVKVDVSDRDQVFAAVEQARKTLGGFDVIVNNAGVAPSTPIESITPEIVDKVYNINVKGVIWGIQAAVEAFKKEGHGGKIINACSQAGHVGNPELAVYSSSKFAVRGLTQTAARDLAPLGITVNGYCPGIVKTPMWAEIDRQVSEAAGKPLGYGTAEFAKRITLGRLSEPEDVAACVSYLASPDSDYMTGQSLLIDGGMVFN.

NAD(+) is bound by residues 6-33 (LVTG…AIAD) and Asp-59. Residue Ser-139 participates in substrate binding. Residue Tyr-152 is the Proton acceptor of the active site. Lys-156 contributes to the NAD(+) binding site.

The protein belongs to the short-chain dehydrogenases/reductases (SDR) family. As to quaternary structure, homotetramer.

The catalysed reaction is (S)-acetoin + NAD(+) = diacetyl + NADH + H(+). Functionally, catalyzes the reversible reduction of (S)-acetoin to 2,3-butanediol in the presence of NADH. The protein is Diacetyl reductase [(S)-acetoin forming] (budC) of Klebsiella pneumoniae.